Reading from the N-terminus, the 117-residue chain is B-box domain protein 30 (117 aa).

Residues 27–73 (KAPVSCELCGENATVYCEADAAFLCRKCDRWVHSANFLARRHLRRVI) form a B box-type; atypical zinc finger. 4 residues coordinate Zn(2+): Cys-32, Cys-35, Cys-54, and His-59. The PFVFL motif lies at 113–117 (PFVFL).

In terms of assembly, interacts with CO (via B-box) and with TPL (via PFVFL motif). As to expression, highly expressed in shoot apical meristems and in vascular tissues of leaves. Also detected in petioles.

The protein localises to the nucleus. In terms of biological role, developmental regulator acting by forming heterodimeric complexes, that sequester CO and CO-like (COL) proteins into non-functional complexes. Engages CO and the transcriptional repressor TPL in a tripartite complex. Involved in the CO-mediated long-day flowering-promotion pathway. The chain is B-box domain protein 30 from Arabidopsis thaliana (Mouse-ear cress).